We begin with the raw amino-acid sequence, 131 residues long: Large ribosomal subunit protein bL20 (131 aa).

Belongs to the bacterial ribosomal protein bL20 family.

Its function is as follows. Binds directly to 23S ribosomal RNA and is necessary for the in vitro assembly process of the 50S ribosomal subunit. It is not involved in the protein synthesizing functions of that subunit. The protein is Large ribosomal subunit protein bL20 of Mycolicibacterium paratuberculosis (strain ATCC BAA-968 / K-10) (Mycobacterium paratuberculosis).